The primary structure comprises 129 residues: D-ribose pyranase 1 (129 aa).

The Proton donor role is filled by histidine 20. Substrate is bound by residues aspartate 28, histidine 96, and 118–120 (YSN).

The protein belongs to the RbsD / FucU family. RbsD subfamily. As to quaternary structure, homodecamer.

The protein resides in the cytoplasm. It carries out the reaction beta-D-ribopyranose = beta-D-ribofuranose. It functions in the pathway carbohydrate metabolism; D-ribose degradation; D-ribose 5-phosphate from beta-D-ribopyranose: step 1/2. Catalyzes the interconversion of beta-pyran and beta-furan forms of D-ribose. In Rubrobacter xylanophilus (strain DSM 9941 / JCM 11954 / NBRC 16129 / PRD-1), this protein is D-ribose pyranase 1.